Consider the following 432-residue polypeptide: Probable exopolygalacturonase X (432 aa).

The N-terminal stretch at 1 to 23 (MKFSYSFVQVVSLLLSLSPSVEG) is a signal peptide. Residues Asn113, Asn129, and Asn199 are each glycosylated (N-linked (GlcNAc...) asparagine). The stretch at 231 to 252 (SDNIVIQNSVINNGDDCVSFKP) is one PbH1 1 repeat. The Proton donor role is filled by Asp245. An intrachain disulfide couples Cys247 to Cys264. N-linked (GlcNAc...) asparagine glycans are attached at residues Asn253 and Asn265. 3 PbH1 repeats span residues 254–274 (STNI…SVGS), 285–306 (VQNV…RIKV), and 327–348 (VKNI…EVTQ). His268 is a catalytic residue. Residues Asn292, Asn297, Asn329, Asn354, and Asn364 are each glycosylated (N-linked (GlcNAc...) asparagine). The PbH1 5 repeat unit spans residues 362-394 (PSNLTISDIHFKNFRGTTSGKRDPDVGTIVCSS). The cysteines at positions 392 and 398 are disulfide-linked.

It belongs to the glycosyl hydrolase 28 family.

Its subcellular location is the secreted. The catalysed reaction is [(1-&gt;4)-alpha-D-galacturonosyl](n) + H2O = alpha-D-galacturonate + [(1-&gt;4)-alpha-D-galacturonosyl](n-1). Specific in hydrolyzing the terminal glycosidic bond of polygalacturonic acid and oligogalacturonates. This Neosartorya fischeri (strain ATCC 1020 / DSM 3700 / CBS 544.65 / FGSC A1164 / JCM 1740 / NRRL 181 / WB 181) (Aspergillus fischerianus) protein is Probable exopolygalacturonase X (pgaX).